The primary structure comprises 167 residues: Insertion element IS1 2 protein InsB (167 aa).

Belongs to the transposase 27 family.

Absolutely required for transposition of IS1. In Escherichia coli (strain K12), this protein is Insertion element IS1 2 protein InsB (insB2).